A 433-amino-acid chain; its full sequence is Peptidoglycan glycosyltransferase RodA (433 aa).

Transmembrane regions (helical) follow at residues 9–29, 44–64, 74–94, 100–120, 158–178, 181–201, 221–241, 249–269, 295–315, 341–361, 378–398, and 400–420; these read FDYLLLLTMLALTSIGILFIY, YLKQIVWAVMGVVLMLSVSMY, TLIFAGFILLLIYTRLFGRYV, WIGVGEFGIQISEFAKIAYIL, LGTASVYLPIFLVMCFIAGFP, LIFAVVCVVLLTLLFTLLPLW, LSLFVFFSLSATSAVAVVGYL, YWITYALGMVSISYGASLLGV, WHIIQSMIAIGSGGAFGMGYL, WGFVGGVIVFGLYLLFFLHTL, GVLGMFLFHFVVNVGMTMGIM, and ITGIPLLLLSYGGSSLWTAMI.

This sequence belongs to the SEDS family. MrdB/RodA subfamily.

The protein resides in the cell inner membrane. The catalysed reaction is [GlcNAc-(1-&gt;4)-Mur2Ac(oyl-L-Ala-gamma-D-Glu-L-Lys-D-Ala-D-Ala)](n)-di-trans,octa-cis-undecaprenyl diphosphate + beta-D-GlcNAc-(1-&gt;4)-Mur2Ac(oyl-L-Ala-gamma-D-Glu-L-Lys-D-Ala-D-Ala)-di-trans,octa-cis-undecaprenyl diphosphate = [GlcNAc-(1-&gt;4)-Mur2Ac(oyl-L-Ala-gamma-D-Glu-L-Lys-D-Ala-D-Ala)](n+1)-di-trans,octa-cis-undecaprenyl diphosphate + di-trans,octa-cis-undecaprenyl diphosphate + H(+). The protein operates within cell wall biogenesis; peptidoglycan biosynthesis. Its function is as follows. Peptidoglycan polymerase that is essential for cell wall elongation. The chain is Peptidoglycan glycosyltransferase RodA from Treponema pallidum (strain Nichols).